Reading from the N-terminus, the 104-residue chain is Small ribosomal subunit protein uS10 (104 aa).

It belongs to the universal ribosomal protein uS10 family. As to quaternary structure, part of the 30S ribosomal subunit.

Its function is as follows. Involved in the binding of tRNA to the ribosomes. The chain is Small ribosomal subunit protein uS10 from Variovorax paradoxus (strain S110).